The primary structure comprises 1020 residues: Protein CLASP-2 (1020 aa).

Positions 259-271 (ASDAASSSTSINS) are enriched in low complexity. Disordered stretches follow at residues 259–280 (ASDA…PFRS), 329–387 (PMTT…RPSA), and 419–461 (LQKA…ALDT). Residues 329-343 (PMTTRTLSKIDTSPG) show a composition bias toward polar residues. Positions 372–381 (SQPGSRNGSP) are enriched in low complexity. A compositionally biased stretch (polar residues) spans 450 to 460 (QKATPQKSALD). The stretch at 954 to 992 (LAPCVIKSYDSPSSAVRKTAVYCLVAMVNKLGMKTMEPH) is one HEAT repeat.

This sequence belongs to the CLASP family. In terms of assembly, interacts with hcp-1 and hcp-2.

It is found in the cytoplasm. The protein resides in the cytoskeleton. The protein localises to the microtubule organizing center. It localises to the centrosome. Its subcellular location is the chromosome. It is found in the centromere. The protein resides in the kinetochore. The protein localises to the spindle. Functionally, probable microtubule plus-end tracking protein that promotes the stabilization of dynamic microtubules. Required for the formation of mitotic and meiotic spindles. Specifically promotes the polymerization of kinetochore-bound microtubules. Also required for cytoplasmic streaming. Essential for embryonic development. This is Protein CLASP-2 (cls-2) from Caenorhabditis elegans.